Consider the following 268-residue polypeptide: GTP cyclohydrolase FolE2 (268 aa).

Belongs to the GTP cyclohydrolase IV family.

It carries out the reaction GTP + H2O = 7,8-dihydroneopterin 3'-triphosphate + formate + H(+). Its pathway is cofactor biosynthesis; 7,8-dihydroneopterin triphosphate biosynthesis; 7,8-dihydroneopterin triphosphate from GTP: step 1/1. Its function is as follows. Converts GTP to 7,8-dihydroneopterin triphosphate. This Paraburkholderia phymatum (strain DSM 17167 / CIP 108236 / LMG 21445 / STM815) (Burkholderia phymatum) protein is GTP cyclohydrolase FolE2.